A 104-amino-acid polypeptide reads, in one-letter code: L-rhamnose mutarotase (104 aa).

Tyr18 provides a ligand contact to substrate. His22 acts as the Proton donor in catalysis. Substrate is bound by residues Tyr41 and 76-77; that span reads WW.

The protein belongs to the rhamnose mutarotase family. As to quaternary structure, homodimer.

The protein resides in the cytoplasm. The enzyme catalyses alpha-L-rhamnose = beta-L-rhamnose. It participates in carbohydrate metabolism; L-rhamnose metabolism. In terms of biological role, involved in the anomeric conversion of L-rhamnose. This Salmonella dublin (strain CT_02021853) protein is L-rhamnose mutarotase.